The chain runs to 228 residues: Probable endo-1,4-beta-xylanase A (228 aa).

The N-terminal stretch at 1–18 (MVSFSYLLLACSAIGALA) is a signal peptide. N-linked (GlcNAc...) asparagine glycosylation occurs at asparagine 29. The GH11 domain maps to 40-228 (AGTPSSTGWN…SSGSASITVY (189 aa)). Residue glutamate 124 is the Nucleophile of the active site. Glutamate 215 (proton donor) is an active-site residue.

It belongs to the glycosyl hydrolase 11 (cellulase G) family.

The protein resides in the secreted. It carries out the reaction Endohydrolysis of (1-&gt;4)-beta-D-xylosidic linkages in xylans.. It participates in glycan degradation; xylan degradation. Its function is as follows. Endo-1,4-beta-xylanase involved in the hydrolysis of xylan, a major structural heterogeneous polysaccharide found in plant biomass representing the second most abundant polysaccharide in the biosphere, after cellulose. In Aspergillus fumigatus (strain CBS 144.89 / FGSC A1163 / CEA10) (Neosartorya fumigata), this protein is Probable endo-1,4-beta-xylanase A (xlnA).